Here is a 718-residue protein sequence, read N- to C-terminus: MINSFKKLIILISLVIILLSSNNIFIDSFKIPVNQKNVKSSGDSSYQIGAGIYDITGASAEVNLMGYANPLQVGAGIHFRQRARAFVFVDSNGNRAVYVSTDSCMIFQEVKIHVVELLQDIFGPNVYTEANVLLSGTHTHSGPAGFSQYALYGITSLGFYKKNFDTICNGIVQAIVKAHKSVQPANMFTETGELWNTNINRSPFAYDNNPEEEKAMYDSNVDKNMTVLRIEDMNGNPFAAISFFAVHCTSMNNTNHLISGDNKGYASYLWEKQVNGPGTAGKGPFVAAFGQSNEGDVSPNTRGPTCRDGSPCDYKTSTCNGRNEECWSLGPGKDGDMFESTQIIGGNQFNKALELFNNASIQVSGPVQYRHSWVQFTNVSVEPPYNSGVDNATTCRGAMGYSFAAGTTDGPGAFNFVQSDNNTSGNPFWNFIGDFIAKPTPDQIRCQSPKPILLDVGMVEPIPWVPDVMPIQIVTIGQIVLVAVPGEFTTMSGRRLRNSVREIIGESIENPIVLIAGLSNTYSGYIATFEEYQVQRYEGASTVFGPHTLGSYMQEFGKLAQSIVDGTTVPAGPTPRNLTGHTLFFLPPVIVDAAPDFDDFGEVSIDVNLNYSVNETVSCVFYGGNPRNDFMIESSFLSVDLLTGTDQWTTVLDDGDWDTKFKWKMHDLGFSLITIEWVIAPDTTPGTYRITHSGFAKKNPFSSNLTPYQGISRNFVVQ.

The first 20 residues, 1–20 (MINSFKKLIILISLVIILLS), serve as a signal peptide directing secretion. 2 N-linked (GlcNAc...) asparagine glycosylation sites follow: Asn224 and Asn252. Ser298 (nucleophile) is an active-site residue. Asn358, Asn378, Asn391, Asn421, Asn422, Asn577, Asn610, and Asn614 each carry an N-linked (GlcNAc...) asparagine glycan.

Belongs to the neutral ceramidase family.

The protein resides in the secreted. It carries out the reaction an N-acylsphing-4-enine + H2O = sphing-4-enine + a fatty acid. Functionally, hydrolyzes the sphingolipid ceramide into sphingosine and free fatty acid. This chain is Neutral ceramidase B (dcd2B), found in Dictyostelium discoideum (Social amoeba).